The chain runs to 172 residues: MRIALLWVAFGALALAAFESIGSFRSEFVQTIRSEDGKIIEYRGRVYAKSPYYGLWKYEKPMEKEIYIVDKQVVIYEPALEQATVSSLQNSIDFMALLRQSKRNSEGIYEATVFEQKYQILADEKGEPQKVFFIDKLHNEVQIIFKNAEINPVLEKEMFLFMPSGEIDLIRQ.

The first 16 residues, 1–16 (MRIALLWVAFGALALA), serve as a signal peptide directing secretion.

This sequence belongs to the LolA family. Monomer.

Its subcellular location is the periplasm. Functionally, participates in the translocation of lipoproteins from the inner membrane to the outer membrane. Only forms a complex with a lipoprotein if the residue after the N-terminal Cys is not an aspartate (The Asp acts as a targeting signal to indicate that the lipoprotein should stay in the inner membrane). This is Outer-membrane lipoprotein carrier protein from Wolinella succinogenes (strain ATCC 29543 / DSM 1740 / CCUG 13145 / JCM 31913 / LMG 7466 / NCTC 11488 / FDC 602W) (Vibrio succinogenes).